A 213-amino-acid polypeptide reads, in one-letter code: Orotate phosphoribosyltransferase (213 aa).

5-phospho-alpha-D-ribose 1-diphosphate is bound at residue lysine 26. An orotate-binding site is contributed by 34–35 (FF). 5-phospho-alpha-D-ribose 1-diphosphate contacts are provided by residues 72–73 (YK), arginine 99, lysine 100, lysine 103, histidine 105, and 124–132 (DDVITAGTA). Positions 128 and 156 each coordinate orotate.

This sequence belongs to the purine/pyrimidine phosphoribosyltransferase family. PyrE subfamily. As to quaternary structure, homodimer. Mg(2+) serves as cofactor.

The catalysed reaction is orotidine 5'-phosphate + diphosphate = orotate + 5-phospho-alpha-D-ribose 1-diphosphate. Its pathway is pyrimidine metabolism; UMP biosynthesis via de novo pathway; UMP from orotate: step 1/2. Functionally, catalyzes the transfer of a ribosyl phosphate group from 5-phosphoribose 1-diphosphate to orotate, leading to the formation of orotidine monophosphate (OMP). The polypeptide is Orotate phosphoribosyltransferase (Cronobacter sakazakii (strain ATCC BAA-894) (Enterobacter sakazakii)).